We begin with the raw amino-acid sequence, 361 residues long: dTDP-glucose 4,6-dehydratase (361 aa).

NAD(+)-binding positions include 11–12 (FI), 32–35 (DKLT), 58–59 (DI), 80–84 (LAAES), and T99. S84 is a binding site for substrate. Position 133 (T133) interacts with substrate. The Proton donor role is filled by D134. Active-site proton acceptor residues include E135 and Y167. 167–171 (YSASK) provides a ligand contact to NAD(+). Residue N196 participates in substrate binding. An NAD(+)-binding site is contributed by N197. Residues 206-207 (KL), 222-224 (PIY), R231, N266, and 296-300 (DRPGH) contribute to the substrate site.

Belongs to the NAD(P)-dependent epimerase/dehydratase family. dTDP-glucose dehydratase subfamily. In terms of assembly, homodimer. Requires NAD(+) as cofactor.

It carries out the reaction dTDP-alpha-D-glucose = dTDP-4-dehydro-6-deoxy-alpha-D-glucose + H2O. Its pathway is carbohydrate biosynthesis; dTDP-L-rhamnose biosynthesis. It participates in bacterial outer membrane biogenesis; LPS O-antigen biosynthesis. Functionally, catalyzes the dehydration of dTDP-D-glucose to form dTDP-6-deoxy-D-xylo-4-hexulose via a three-step process involving oxidation, dehydration and reduction. The sequence is that of dTDP-glucose 4,6-dehydratase (rfbB) from Shigella flexneri.